The following is a 92-amino-acid chain: Small ribosomal subunit protein uS19 (92 aa).

The protein belongs to the universal ribosomal protein uS19 family.

Protein S19 forms a complex with S13 that binds strongly to the 16S ribosomal RNA. This chain is Small ribosomal subunit protein uS19, found in Phenylobacterium zucineum (strain HLK1).